Consider the following 435-residue polypeptide: MIDQNLLRTNLDDVANALKVKRGFTLDVESVKALEEKRKALQVKTETLQAERNARSKNIGAAKARGEDISALLAEVDNMGNELNEAKVALDQVQAEIRELLLSVPNLPADEVPLGKDDTENLEVSRWGEPRQFDFEVKDHVALGEALNGLDFAAGVKLTASRFVVMKGKLARLHRALSQFMLDLHTEQHGYVETNVPFLVNHDTLFGTGQLPKFGEDLFHTQPLTGQDPNETQRPFSLIPTAEVPVTNLVRDEIIDENSLPLRYTAHTPCFRSEAGSYGRDTRGLIRMHQFEKVEMVQIVAPEKSMEALEELTGHAEKVLQLLGLPYRKVLLCTGDMGFGSAKTYDLEVWLPAQNTYREISSCSNMWDFQARRMSARCKAKGDKKTRLVHTLNGSGLAVGRTLVAVLENYQNADGSITVPEVLRPYMGGVEVITA.

Residue 241–243 (TAE) coordinates L-serine. An ATP-binding site is contributed by 272 to 274 (RSE). Position 295 (Glu295) interacts with L-serine. Residue 359-362 (EISS) participates in ATP binding. Ser395 contributes to the L-serine binding site.

Belongs to the class-II aminoacyl-tRNA synthetase family. Type-1 seryl-tRNA synthetase subfamily. Homodimer. The tRNA molecule binds across the dimer.

Its subcellular location is the cytoplasm. It catalyses the reaction tRNA(Ser) + L-serine + ATP = L-seryl-tRNA(Ser) + AMP + diphosphate + H(+). The enzyme catalyses tRNA(Sec) + L-serine + ATP = L-seryl-tRNA(Sec) + AMP + diphosphate + H(+). It participates in aminoacyl-tRNA biosynthesis; selenocysteinyl-tRNA(Sec) biosynthesis; L-seryl-tRNA(Sec) from L-serine and tRNA(Sec): step 1/1. Its function is as follows. Catalyzes the attachment of serine to tRNA(Ser). Is also able to aminoacylate tRNA(Sec) with serine, to form the misacylated tRNA L-seryl-tRNA(Sec), which will be further converted into selenocysteinyl-tRNA(Sec). This is Serine--tRNA ligase from Actinobacillus pleuropneumoniae serotype 5b (strain L20).